The chain runs to 1445 residues: CD109 antigen (1445 aa).

A signal peptide spans 1-21 (MQGPPLLTAAHLLCVCTAALA). Residues asparagine 68, asparagine 118, asparagine 247, asparagine 279, asparagine 365, asparagine 419, asparagine 513, and asparagine 645 are each glycosylated (N-linked (GlcNAc...) asparagine). Positions 593-702 (DKSVNLMNAS…TWIWLDTNMG (110 aa)) are bait region (approximate). A cross-link (isoglutamyl cysteine thioester (Cys-Gln)) is located at residues 921–924 (CGEQ). 2 N-linked (GlcNAc...) asparagine glycosylation sites follow: asparagine 1086 and asparagine 1355. The GPI-anchor amidated alanine moiety is linked to residue alanine 1420. Residues 1421 to 1445 (SGSHHHSSVIFIFCFKLLYFMELWL) constitute a propeptide, removed in mature form.

Belongs to the protease inhibitor I39 (alpha-2-macroglobulin) family. Heterodimer; disulfide-linked. Interacts with TGFB1 and TGFBR1. Forms a heteromeric complex with TGFBR1, TGFBR2 and TGFBR3 in a ligand-independent manner. Post-translationally, N-glycosylated. 2 forms of 150 (p150) and 120 kDa (p120) exist due to proteolytic degradation from a 180 kDa form. In terms of tissue distribution, widely expressed with high level in uterus, aorta, heart, lung, trachea, placenta and in fetal heart, kidney, liver, spleen and lung. Expressed by CD34(+) acute myeloid leukemia cell lines, T-cell lines, activated T-lymphoblasts, endothelial cells and activated platelets. Isoform 4 is expressed in placenta. Isoform 1 is expressed in keratinocytes and placenta.

The protein resides in the cell membrane. In terms of biological role, modulates negatively TGFB1 signaling in keratinocytes. This is CD109 antigen (CD109) from Homo sapiens (Human).